Reading from the N-terminus, the 543-residue chain is DM7 family protein GG19680 (543 aa).

A compositionally biased stretch (basic and acidic residues) spans 415 to 430 (GETQEMDEAHPTKEES). The tract at residues 415–443 (GETQEMDEAHPTKEESKSEEEGEVQSGSQ) is disordered.

It belongs to the DM7 family.

This is DM7 family protein GG19680 from Drosophila erecta (Fruit fly).